We begin with the raw amino-acid sequence, 380 residues long: MKNEMLALILAGGQGTRLAKLTQSIAKPAVQFGGRYRIIDFALSNCANSGIHNVGVVTQYQPLALNNHIGNGSSWGLDGIDSGVSILQPYSASEGNRWFEGTSHAIYQNIDYIDSVNPEYVLILSGDHIYKMDYDDMLQSHKDNNASLTVAVLDVPLKEASRFGIMNTDANNRIVEFEEKPAQPKSTKASMGIYIFDWQRLRNMLVAAEKSKVGMSDFGKNVIPNYLELGESVYAYEFSGYWKDVGTIESLWEANMEYISPENALDSRNRQWKIYSRNLISPPNFLGANAHVEDSLVVDGCFVDGTVKHSILSTGAQVREGAEVLDSVIMSGAIIGQGAKIKRAIIGEGAIISDGVEIDGTDEVQVVGYNEVVGVATDED.

Residues glycine 164, glutamate 179 to lysine 180, and serine 190 contribute to the alpha-D-glucose 1-phosphate site.

Belongs to the bacterial/plant glucose-1-phosphate adenylyltransferase family. As to quaternary structure, homotetramer.

The enzyme catalyses alpha-D-glucose 1-phosphate + ATP + H(+) = ADP-alpha-D-glucose + diphosphate. The protein operates within glycan biosynthesis; glycogen biosynthesis. Functionally, involved in the biosynthesis of ADP-glucose, a building block required for the elongation reactions to produce glycogen. Catalyzes the reaction between ATP and alpha-D-glucose 1-phosphate (G1P) to produce pyrophosphate and ADP-Glc. The polypeptide is Glucose-1-phosphate adenylyltransferase (Streptococcus pneumoniae (strain CGSP14)).